The following is a 120-amino-acid chain: MARIAGVDLPKKKRVEYALTYIYGIGLKSSREILEAVGISFDKRVHELSEDEVSSIAKKIQQSYLVEGDLRKKVQMDIKSLMDLGNYRGIRHRKGLPVRGQTTKNNARTRKGKKKTVGSK.

The segment at 93-120 (RKGLPVRGQTTKNNARTRKGKKKTVGSK) is disordered. Over residues 107–120 (ARTRKGKKKTVGSK) the composition is skewed to basic residues.

It belongs to the universal ribosomal protein uS13 family. Part of the 30S ribosomal subunit. Forms a loose heterodimer with protein S19. Forms two bridges to the 50S subunit in the 70S ribosome.

In terms of biological role, located at the top of the head of the 30S subunit, it contacts several helices of the 16S rRNA. In the 70S ribosome it contacts the 23S rRNA (bridge B1a) and protein L5 of the 50S subunit (bridge B1b), connecting the 2 subunits; these bridges are implicated in subunit movement. Contacts the tRNAs in the A and P-sites. The sequence is that of Small ribosomal subunit protein uS13 from Helicobacter pylori (strain P12).